The chain runs to 454 residues: Septin-10 (454 aa).

The Septin-type G domain occupies 63-329 (QGFCFNILCV…ELYRRCKLEE (267 aa)). The tract at residues 73–80 (GETGIGKS) is G1 motif. GTP is bound by residues 73-80 (GETGIGKS), glycine 128, 209-217 (KADTVSKTE), glycine 263, and arginine 278. Residues 125-128 (NTVG) form a G3 motif region. Residues 208 to 211 (AKAD) are G4 motif.

This sequence belongs to the TRAFAC class TrmE-Era-EngA-EngB-Septin-like GTPase superfamily. Septin GTPase family. As to quaternary structure, septins polymerize into heterooligomeric protein complexes that form filaments, and can associate with cellular membranes, actin filaments and microtubules. GTPase activity is required for filament formation. Interacts with ADGB. Post-translationally, proteolytically cleaved in vitro in a calmodulin-dependent manner. Widely expressed. Abundantly expressed in heart and kidney, placenta, skeletal muscles, liver and lung, as well as various tumor cell lines.

The protein resides in the cytoplasm. It localises to the cytoskeleton. Its subcellular location is the cell projection. It is found in the cilium. The protein localises to the flagellum. Filament-forming cytoskeletal GTPase. May play a role in cytokinesis (Potential). The protein is Septin-10 of Homo sapiens (Human).